We begin with the raw amino-acid sequence, 205 residues long: Glutathione peroxidase 1 (205 aa).

Ser37 carries the phosphoserine modification. Sec52 is an active-site residue. Residue Sec52 is a non-standard amino acid, selenocysteine. 2 positions are modified to N6-acetyllysine; alternate: Lys91 and Lys117. Residues Lys91 and Lys117 each carry the N6-succinyllysine; alternate modification. Residue Lys117 is glycosylated (N-linked (Glc) (glycation) lysine; in vitro). Position 124 is an N6-acetyllysine (Lys124). Lys151 is modified (N6-acetyllysine; alternate). Lys151 carries the N6-succinyllysine; alternate modification. Ser200 and Ser204 each carry phosphoserine.

The protein belongs to the glutathione peroxidase family. Homotetramer. Interacts with MIEN1. In terms of processing, during periods of oxidative stress, Sec-52 may react with a superoxide radical, irreversibly lose hydroselenide and be converted to dehydroalanine.

It localises to the cytoplasm. The protein localises to the mitochondrion. The enzyme catalyses 2 glutathione + H2O2 = glutathione disulfide + 2 H2O. It carries out the reaction a hydroperoxy polyunsaturated fatty acid + 2 glutathione = a hydroxy polyunsaturated fatty acid + glutathione disulfide + H2O. It catalyses the reaction tert-butyl hydroperoxide + 2 glutathione = tert-butanol + glutathione disulfide + H2O. The catalysed reaction is cumene hydroperoxide + 2 glutathione = 2-phenylpropan-2-ol + glutathione disulfide + H2O. The enzyme catalyses (13S)-hydroperoxy-(9Z,11E)-octadecadienoate + 2 glutathione = (13S)-hydroxy-(9Z,11E)-octadecadienoate + glutathione disulfide + H2O. It carries out the reaction (9S)-hydroperoxy-(10E,12Z)-octadecadienoate + 2 glutathione = (9S)-hydroxy-(10E,12Z)-octadecadienoate + glutathione disulfide + H2O. It catalyses the reaction (5S)-hydroperoxy-(6E,8Z,11Z,14Z)-eicosatetraenoate + 2 glutathione = (5S)-hydroxy-(6E,8Z,11Z,14Z)-eicosatetraenoate + glutathione disulfide + H2O. The catalysed reaction is (12S)-hydroperoxy-(5Z,8Z,10E,14Z)-eicosatetraenoate + 2 glutathione = (12S)-hydroxy-(5Z,8Z,10E,14Z)-eicosatetraenoate + glutathione disulfide + H2O. The enzyme catalyses (12R)-hydroperoxy-(5Z,8Z,10E,14Z)-eicosatetraenoate + 2 glutathione = (12R)-hydroxy-(5Z,8Z,10E,14Z)-eicosatetraenoate + glutathione disulfide + H2O. It carries out the reaction (15S)-hydroperoxy-(5Z,8Z,11Z,13E)-eicosatetraenoate + 2 glutathione = (15S)-hydroxy-(5Z,8Z,11Z,13E)-eicosatetraenoate + glutathione disulfide + H2O. It catalyses the reaction (5S)-hydroperoxy-(6E,8Z,11Z,14Z,17Z)-eicosapentaenoate + 2 glutathione = (5S)-hydroxy-(6E,8Z,11Z,14Z,17Z)-eicosapentaenoate + glutathione disulfide + H2O. The catalysed reaction is (15S)-hydroperoxy-(5Z,8Z,11Z,13E,17Z)-eicosapentaenoate + 2 glutathione = (15S)-hydroxy-(5Z,8Z,11Z,13E,17Z)-eicosapentaenoate + glutathione disulfide + H2O. The enzyme catalyses (15S)-hydroperoxy-(11Z,13E)-eicosadienoate + 2 glutathione = (15S)-hydroxy-(11Z,13E)-eicosadienoate + glutathione disulfide + H2O. It carries out the reaction (17S)-hydroperoxy-(4Z,7Z,10Z,13Z,15E,19Z)-docosahexaenoate + 2 glutathione = (17S)-hydroxy-(4Z,7Z,10Z,13Z,15E,19Z)-docosahexaenoate + glutathione disulfide + H2O. Functionally, catalyzes the reduction of hydroperoxides in a glutathione-dependent manner thus regulating cellular redox homeostasis. Can reduce small soluble hydroperoxides such as H2O2, cumene hydroperoxide and tert-butyl hydroperoxide, as well as several fatty acid-derived hydroperoxides. In platelets catalyzes the reduction of 12-hydroperoxyeicosatetraenoic acid, the primary product of the arachidonate 12-lipoxygenase pathway. The protein is Glutathione peroxidase 1 (GPX1) of Bos taurus (Bovine).